The sequence spans 50 residues: Large ribosomal subunit protein eL39 (50 aa).

The protein belongs to the eukaryotic ribosomal protein eL39 family.

The protein is Large ribosomal subunit protein eL39 of Methanoculleus marisnigri (strain ATCC 35101 / DSM 1498 / JR1).